The sequence spans 291 residues: ATP synthase gamma chain (291 aa).

The protein belongs to the ATPase gamma chain family. In terms of assembly, F-type ATPases have 2 components, CF(1) - the catalytic core - and CF(0) - the membrane proton channel. CF(1) has five subunits: alpha(3), beta(3), gamma(1), delta(1), epsilon(1). CF(0) has three main subunits: a, b and c.

Its subcellular location is the cell inner membrane. Produces ATP from ADP in the presence of a proton gradient across the membrane. The gamma chain is believed to be important in regulating ATPase activity and the flow of protons through the CF(0) complex. This chain is ATP synthase gamma chain, found in Cupriavidus metallidurans (strain ATCC 43123 / DSM 2839 / NBRC 102507 / CH34) (Ralstonia metallidurans).